Here is a 322-residue protein sequence, read N- to C-terminus: Acetyl-coenzyme A carboxylase carboxyl transferase subunit alpha (322 aa).

The 255-residue stretch at 39 to 293 (RLAAKSQQLT…KRALAESLRQ (255 aa)) folds into the CoA carboxyltransferase C-terminal domain.

Belongs to the AccA family. Acetyl-CoA carboxylase is a heterohexamer composed of biotin carboxyl carrier protein (AccB), biotin carboxylase (AccC) and two subunits each of ACCase subunit alpha (AccA) and ACCase subunit beta (AccD).

It localises to the cytoplasm. The enzyme catalyses N(6)-carboxybiotinyl-L-lysyl-[protein] + acetyl-CoA = N(6)-biotinyl-L-lysyl-[protein] + malonyl-CoA. The protein operates within lipid metabolism; malonyl-CoA biosynthesis; malonyl-CoA from acetyl-CoA: step 1/1. In terms of biological role, component of the acetyl coenzyme A carboxylase (ACC) complex. First, biotin carboxylase catalyzes the carboxylation of biotin on its carrier protein (BCCP) and then the CO(2) group is transferred by the carboxyltransferase to acetyl-CoA to form malonyl-CoA. In Ralstonia nicotianae (strain ATCC BAA-1114 / GMI1000) (Ralstonia solanacearum), this protein is Acetyl-coenzyme A carboxylase carboxyl transferase subunit alpha.